A 525-amino-acid chain; its full sequence is GMP synthase [glutamine-hydrolyzing] (525 aa).

Residues 9–207 (RILILDFGSQ…VQDICGCEAL (199 aa)) enclose the Glutamine amidotransferase type-1 domain. The active-site Nucleophile is the C86. Residues H181 and E183 contribute to the active site. The 193-residue stretch at 208-400 (WTPSNIVEDA…LGLPYDMVYR (193 aa)) folds into the GMPS ATP-PPase domain. Position 235 to 241 (235 to 241 (SGGVDSS)) interacts with ATP.

Homodimer.

It carries out the reaction XMP + L-glutamine + ATP + H2O = GMP + L-glutamate + AMP + diphosphate + 2 H(+). The protein operates within purine metabolism; GMP biosynthesis; GMP from XMP (L-Gln route): step 1/1. Functionally, catalyzes the synthesis of GMP from XMP. The chain is GMP synthase [glutamine-hydrolyzing] from Pseudomonas putida (strain W619).